The primary structure comprises 117 residues: Large ribosomal subunit protein eL22 (117 aa).

Residues serine 49 and serine 50 each carry the phosphoserine modification.

Belongs to the eukaryotic ribosomal protein eL22 family. In terms of assembly, component of the large ribosomal subunit (LSU). Mature yeast ribosomes consist of a small (40S) and a large (60S) subunit. The 40S small subunit contains 1 molecule of ribosomal RNA (18S rRNA) and at least 33 different proteins. The large 60S subunit contains 3 rRNA molecules (25S, 5.8S and 5S rRNA) and at least 46 different proteins.

The protein resides in the cytoplasm. It localises to the nucleus. It is found in the nucleolus. Component of the ribosome, a large ribonucleoprotein complex responsible for the synthesis of proteins in the cell. The small ribosomal subunit (SSU) binds messenger RNAs (mRNAs) and translates the encoded message by selecting cognate aminoacyl-transfer RNA (tRNA) molecules. The large subunit (LSU) contains the ribosomal catalytic site termed the peptidyl transferase center (PTC), which catalyzes the formation of peptide bonds, thereby polymerizing the amino acids delivered by tRNAs into a polypeptide chain. The nascent polypeptides leave the ribosome through a tunnel in the LSU and interact with protein factors that function in enzymatic processing, targeting, and the membrane insertion of nascent chains at the exit of the ribosomal tunnel. This Schizosaccharomyces pombe (strain 972 / ATCC 24843) (Fission yeast) protein is Large ribosomal subunit protein eL22 (rpl22).